The primary structure comprises 231 residues: CD302 antigen (231 aa).

The signal sequence occupies residues 1–21 (MSAAVVATLPTLLLLLGLAAA). Topologically, residues 22-169 (DCPSSSWVQF…YEKKYLPDHH (148 aa)) are extracellular. Positions 31 to 153 (FQSNCYIFLQ…CEVSSVEGAL (123 aa)) constitute a C-type lectin domain. Residue asparagine 110 is glycosylated (N-linked (GlcNAc...) asparagine). A disulfide bridge connects residues cysteine 129 and cysteine 144. The helical transmembrane segment at 170 to 190 (ILITALVIASTTILTITGAVV) threads the bilayer. The Cytoplasmic segment spans residues 191 to 231 (WFLYKRNLTSGLTNTAYTTAPQLPYNDDCILVDAEENEYVA).

It is found in the membrane. Its subcellular location is the cell projection. It localises to the filopodium. The protein localises to the cytoplasm. The protein resides in the cell cortex. It is found in the microvillus. Functionally, potential multifunctional C-type lectin receptor that may play roles in endocytosis and phagocytosis as well as in cell adhesion and migration. This Trichosurus vulpecula (Brush-tailed possum) protein is CD302 antigen.